Consider the following 198-residue polypeptide: MQYPEPISKLIDSFMKLPGIGPKTAVRLAFFVLGMKEDVVLDFAKALVNAKRNLTYCSVCGHITDQDPCYICEDTRRDKSVICVVQDPKDVIAMEKMKEYNGQYHVLHGAISPMDGIGPEDIKIPELLKRLQDDQVTEVILATNPNIEGEATAMYISRLLKPSGIKLSRIAHGLPVGGDLEYADEVTLSKALEGRREL.

The segment at 57–72 adopts a C4-type zinc-finger fold; it reads CSVCGHITDQDPCYIC. The 96-residue stretch at 80-175 folds into the Toprim domain; the sequence is SVICVVQDPK…KLSRIAHGLP (96 aa).

The protein belongs to the RecR family.

Its function is as follows. May play a role in DNA repair. It seems to be involved in an RecBC-independent recombinational process of DNA repair. It may act with RecF and RecO. This Bacillus subtilis (strain 168) protein is Recombination protein RecR.